A 262-amino-acid polypeptide reads, in one-letter code: Tryptophan synthase alpha chain (262 aa).

Residues Glu48 and Asp59 each act as proton acceptor in the active site.

Belongs to the TrpA family. In terms of assembly, tetramer of two alpha and two beta chains.

It catalyses the reaction (1S,2R)-1-C-(indol-3-yl)glycerol 3-phosphate + L-serine = D-glyceraldehyde 3-phosphate + L-tryptophan + H2O. The protein operates within amino-acid biosynthesis; L-tryptophan biosynthesis; L-tryptophan from chorismate: step 5/5. Its function is as follows. The alpha subunit is responsible for the aldol cleavage of indoleglycerol phosphate to indole and glyceraldehyde 3-phosphate. This Helicobacter pylori (strain HPAG1) protein is Tryptophan synthase alpha chain.